A 217-amino-acid polypeptide reads, in one-letter code: Large ribosomal subunit protein uL3 (217 aa).

The protein belongs to the universal ribosomal protein uL3 family. Part of the 50S ribosomal subunit. Forms a cluster with proteins L14 and L19.

In terms of biological role, one of the primary rRNA binding proteins, it binds directly near the 3'-end of the 23S rRNA, where it nucleates assembly of the 50S subunit. The polypeptide is Large ribosomal subunit protein uL3 (Brachyspira hyodysenteriae (strain ATCC 49526 / WA1)).